The chain runs to 591 residues: Aspartate--tRNA(Asp/Asn) ligase (591 aa).

Glu174 is a binding site for L-aspartate. The segment at 198–201 (QLFK) is aspartate. Arg220 serves as a coordination point for L-aspartate. ATP contacts are provided by residues 220–222 (RDE) and Gln229. His450 is a binding site for L-aspartate. Position 483 (Glu483) interacts with ATP. L-aspartate is bound at residue Arg490. ATP is bound at residue 535–538 (GLDR).

The protein belongs to the class-II aminoacyl-tRNA synthetase family. Type 1 subfamily. Homodimer.

It localises to the cytoplasm. It carries out the reaction tRNA(Asx) + L-aspartate + ATP = L-aspartyl-tRNA(Asx) + AMP + diphosphate. Its function is as follows. Aspartyl-tRNA synthetase with relaxed tRNA specificity since it is able to aspartylate not only its cognate tRNA(Asp) but also tRNA(Asn). Reaction proceeds in two steps: L-aspartate is first activated by ATP to form Asp-AMP and then transferred to the acceptor end of tRNA(Asp/Asn). The polypeptide is Aspartate--tRNA(Asp/Asn) ligase (Pseudomonas fluorescens (strain Pf0-1)).